Consider the following 208-residue polypeptide: Protein GrpE (208 aa).

The span at 1–12 (MTNKDESVEKNT) shows a compositional bias: basic and acidic residues. The disordered stretch occupies residues 1-49 (MTNKDESVEKNTESTVEVTNVKQNIDDSVEQTEESKGHLQDEAIEETSD). Positions 13–23 (ESTVEVTNVKQ) are enriched in polar residues.

Belongs to the GrpE family. Homodimer.

Its subcellular location is the cytoplasm. Functionally, participates actively in the response to hyperosmotic and heat shock by preventing the aggregation of stress-denatured proteins, in association with DnaK and GrpE. It is the nucleotide exchange factor for DnaK and may function as a thermosensor. Unfolded proteins bind initially to DnaJ; upon interaction with the DnaJ-bound protein, DnaK hydrolyzes its bound ATP, resulting in the formation of a stable complex. GrpE releases ADP from DnaK; ATP binding to DnaK triggers the release of the substrate protein, thus completing the reaction cycle. Several rounds of ATP-dependent interactions between DnaJ, DnaK and GrpE are required for fully efficient folding. The protein is Protein GrpE of Staphylococcus aureus (strain bovine RF122 / ET3-1).